Here is a 112-residue protein sequence, read N- to C-terminus: Ribonuclease P protein component (112 aa).

It belongs to the RnpA family. In terms of assembly, consists of a catalytic RNA component (M1 or rnpB) and a protein subunit.

It carries out the reaction Endonucleolytic cleavage of RNA, removing 5'-extranucleotides from tRNA precursor.. Functionally, RNaseP catalyzes the removal of the 5'-leader sequence from pre-tRNA to produce the mature 5'-terminus. It can also cleave other RNA substrates such as 4.5S RNA. The protein component plays an auxiliary but essential role in vivo by binding to the 5'-leader sequence and broadening the substrate specificity of the ribozyme. The polypeptide is Ribonuclease P protein component (Clostridium kluyveri (strain ATCC 8527 / DSM 555 / NBRC 12016 / NCIMB 10680 / K1)).